We begin with the raw amino-acid sequence, 306 residues long: Mitochondrial basic amino acids transporter (306 aa).

6 helical membrane-spanning segments follow: residues 2–22, 61–81, 96–116, 153–172, 187–207, and 255–275; these read ALDF…GHPF, GLGS…GVQG, FLAG…MELA, GMVS…FLTY, LLVP…WLST, and LLRA…VLTY. 3 Solcar repeats span residues 2 to 86, 90 to 178, and 190 to 275; these read ALDF…TLRA, DSPL…MTRA, and PKLL…VLTY. The tract at residues 284-306 is disordered; the sequence is DSEAALGTSPTPAGSALAQPSSL. Over residues 291-306 the composition is skewed to polar residues; the sequence is TSPTPAGSALAQPSSL.

Belongs to the mitochondrial carrier (TC 2.A.29) family. Widely expressed, with highest levels in the brain, including cortex, cerebellum, hippocampus and hypothalamus, and moderate levels in liver, kidney, heart and testis.

It localises to the mitochondrion inner membrane. The catalysed reaction is L-lysine(out) + L-arginine(in) = L-lysine(in) + L-arginine(out). The enzyme catalyses L-histidine(out) + L-arginine(in) = L-histidine(in) + L-arginine(out). It catalyses the reaction L-ornithine(in) + L-arginine(out) = L-ornithine(out) + L-arginine(in). It carries out the reaction L-homoarginine(in) + L-arginine(out) = L-homoarginine(out) + L-arginine(in). The catalysed reaction is N(omega)-methyl-L-arginine(in) + L-arginine(out) = N(omega)-methyl-L-arginine(out) + L-arginine(in). The enzyme catalyses L-arginine(in) = L-arginine(out). It catalyses the reaction L-lysine(in) = L-lysine(out). It carries out the reaction L-ornithine(in) = L-ornithine(out). The catalysed reaction is L-histidine(out) = L-histidine(in). Mitochondrial transporter of arginine, lysine, homoarginine, methylarginine. Transports with a much lesser extent, ornithine and histidine. Does not transport carnitine nor acylcarnitines. Functions by both counter-exchange and uniport mechanisms. Plays a physiological role in the import of basic amino acids into mitochondria for mitochondrial protein synthesis and amino acid degradation. In Mus musculus (Mouse), this protein is Mitochondrial basic amino acids transporter (Slc25a29).